The primary structure comprises 407 residues: Proteasome-activating nucleotidase (407 aa).

Positions 22-67 (KEKAYLAELESKVLRLELKNKDITRENVQIKKENEILKRELDKLRI) form a coiled coil. ATP contacts are provided by residues 192–197 (GTGKTL) and His-331. The interval 405-407 (MYG) is docks into pockets in the proteasome alpha-ring to cause gate opening.

The protein belongs to the AAA ATPase family. As to quaternary structure, homohexamer. The hexameric complex has a two-ring architecture resembling a top hat that caps the 20S proteasome core at one or both ends. Upon ATP-binding, the C-terminus of PAN interacts with the alpha-rings of the proteasome core by binding to the intersubunit pockets.

It localises to the cytoplasm. Functionally, ATPase which is responsible for recognizing, binding, unfolding and translocation of substrate proteins into the archaeal 20S proteasome core particle. Is essential for opening the gate of the 20S proteasome via an interaction with its C-terminus, thereby allowing substrate entry and access to the site of proteolysis. Thus, the C-termini of the proteasomal ATPase function like a 'key in a lock' to induce gate opening and therefore regulate proteolysis. Unfolding activity requires energy from ATP hydrolysis, whereas ATP binding alone promotes ATPase-20S proteasome association which triggers gate opening, and supports translocation of unfolded substrates. This chain is Proteasome-activating nucleotidase, found in Methanococcus vannielii (strain ATCC 35089 / DSM 1224 / JCM 13029 / OCM 148 / SB).